A 230-amino-acid chain; its full sequence is 7-cyano-7-deazaguanine synthase (230 aa).

8–18 (FSGGQDSTTCL) serves as a coordination point for ATP. Zn(2+) contacts are provided by cysteine 187, cysteine 196, cysteine 199, and cysteine 202.

It belongs to the QueC family. It depends on Zn(2+) as a cofactor.

It carries out the reaction 7-carboxy-7-deazaguanine + NH4(+) + ATP = 7-cyano-7-deazaguanine + ADP + phosphate + H2O + H(+). It functions in the pathway purine metabolism; 7-cyano-7-deazaguanine biosynthesis. Functionally, catalyzes the ATP-dependent conversion of 7-carboxy-7-deazaguanine (CDG) to 7-cyano-7-deazaguanine (preQ(0)). The polypeptide is 7-cyano-7-deazaguanine synthase (Shewanella amazonensis (strain ATCC BAA-1098 / SB2B)).